The chain runs to 206 residues: Small ribosomal subunit protein uS4 (206 aa).

The S4 RNA-binding domain occupies 96–156 (GRLDNVVYRM…EKAKKQSRVK (61 aa)).

Belongs to the universal ribosomal protein uS4 family. As to quaternary structure, part of the 30S ribosomal subunit. Contacts protein S5. The interaction surface between S4 and S5 is involved in control of translational fidelity.

Functionally, one of the primary rRNA binding proteins, it binds directly to 16S rRNA where it nucleates assembly of the body of the 30S subunit. In terms of biological role, with S5 and S12 plays an important role in translational accuracy. The sequence is that of Small ribosomal subunit protein uS4 from Pectobacterium atrosepticum (strain SCRI 1043 / ATCC BAA-672) (Erwinia carotovora subsp. atroseptica).